Here is a 417-residue protein sequence, read N- to C-terminus: UDP-N-acetylglucosamine 1-carboxyvinyltransferase (417 aa).

23–24 (KN) lines the phosphoenolpyruvate pocket. Arg93 contributes to the UDP-N-acetyl-alpha-D-glucosamine binding site. Residue Asp117 is the Proton donor of the active site. Asp305 and Val327 together coordinate UDP-N-acetyl-alpha-D-glucosamine.

Belongs to the EPSP synthase family. MurA subfamily.

Its subcellular location is the cytoplasm. The enzyme catalyses phosphoenolpyruvate + UDP-N-acetyl-alpha-D-glucosamine = UDP-N-acetyl-3-O-(1-carboxyvinyl)-alpha-D-glucosamine + phosphate. Its pathway is cell wall biogenesis; peptidoglycan biosynthesis. Functionally, cell wall formation. Adds enolpyruvyl to UDP-N-acetylglucosamine. This is UDP-N-acetylglucosamine 1-carboxyvinyltransferase from Mycolicibacterium paratuberculosis (strain ATCC BAA-968 / K-10) (Mycobacterium paratuberculosis).